The primary structure comprises 604 residues: Putative O-acetyltransferase SAV0974 (604 aa).

11 helical membrane-spanning segments follow: residues 15–35 (YMPG…IYHL), 43–63 (GFLG…SLLL), 85–105 (LLPA…LLKS), 150–170 (AIEE…LLTI), 176–196 (IGFI…FIYS), 212–232 (LQTL…KLKN), 240–260 (YVID…FFII), 267–287 (IYDG…ASVV), 310–330 (YSLY…YVDG), 332–352 (IPVY…ELSY), and 377–397 (FIRM…LVGA). Active-site residues include Ser459, Asp581, and His584.

It belongs to the acyltransferase 3 family.

It is found in the cell membrane. This is Putative O-acetyltransferase SAV0974 from Staphylococcus aureus (strain Mu50 / ATCC 700699).